Here is a 208-residue protein sequence, read N- to C-terminus: N-(5'-phosphoribosyl)anthranilate isomerase (208 aa).

This sequence belongs to the TrpF family.

The catalysed reaction is N-(5-phospho-beta-D-ribosyl)anthranilate = 1-(2-carboxyphenylamino)-1-deoxy-D-ribulose 5-phosphate. Its pathway is amino-acid biosynthesis; L-tryptophan biosynthesis; L-tryptophan from chorismate: step 3/5. In Desulforamulus reducens (strain ATCC BAA-1160 / DSM 100696 / MI-1) (Desulfotomaculum reducens), this protein is N-(5'-phosphoribosyl)anthranilate isomerase.